Here is an 872-residue protein sequence, read N- to C-terminus: Alanine--tRNA ligase (872 aa).

Zn(2+) contacts are provided by histidine 567, histidine 571, cysteine 669, and histidine 673.

It belongs to the class-II aminoacyl-tRNA synthetase family. Zn(2+) serves as cofactor.

Its subcellular location is the cytoplasm. It catalyses the reaction tRNA(Ala) + L-alanine + ATP = L-alanyl-tRNA(Ala) + AMP + diphosphate. In terms of biological role, catalyzes the attachment of alanine to tRNA(Ala) in a two-step reaction: alanine is first activated by ATP to form Ala-AMP and then transferred to the acceptor end of tRNA(Ala). Also edits incorrectly charged Ser-tRNA(Ala) and Gly-tRNA(Ala) via its editing domain. The polypeptide is Alanine--tRNA ligase (Streptococcus pneumoniae serotype 4 (strain ATCC BAA-334 / TIGR4)).